Consider the following 430-residue polypeptide: Tol-Pal system protein TolB (430 aa).

Residues 1–21 (MKQAFRVALSVLMLFVAVAHA) form the signal peptide.

It belongs to the TolB family. In terms of assembly, the Tol-Pal system is composed of five core proteins: the inner membrane proteins TolA, TolQ and TolR, the periplasmic protein TolB and the outer membrane protein Pal. They form a network linking the inner and outer membranes and the peptidoglycan layer.

The protein resides in the periplasm. In terms of biological role, part of the Tol-Pal system, which plays a role in outer membrane invagination during cell division and is important for maintaining outer membrane integrity. TolB occupies a key intermediary position in the Tol-Pal system because it communicates directly with both membrane-embedded components, Pal in the outer membrane and TolA in the inner membrane. The protein is Tol-Pal system protein TolB of Erwinia tasmaniensis (strain DSM 17950 / CFBP 7177 / CIP 109463 / NCPPB 4357 / Et1/99).